The sequence spans 47 residues: MIYDVNSPLFRSFLSQKGGSSDKRKTEEQKPKEHRPKASENKPIMTE.

The segment at 1–47 (MIYDVNSPLFRSFLSQKGGSSDKRKTEEQKPKEHRPKASENKPIMTE) is disordered. Basic and acidic residues predominate over residues 20–40 (SSDKRKTEEQKPKEHRPKASE).

As to expression, abundant in radicals and epicotyls of seedlings and higher in the roots than in stems and leaves of mature plants.

The protein is Wound-induced basic protein (PR4) of Phaseolus vulgaris (Kidney bean).